Consider the following 118-residue polypeptide: UPF0102 protein Cphy_2398 (118 aa).

Belongs to the UPF0102 family.

In Lachnoclostridium phytofermentans (strain ATCC 700394 / DSM 18823 / ISDg) (Clostridium phytofermentans), this protein is UPF0102 protein Cphy_2398.